The following is a 455-amino-acid chain: MWGGRFSAKPAELMQAINVSIGFDKRLWAQDLAGSRAHARMLISQGVIARDDGEEILKGLDAIEGEIVAGAFPFRDEYEDIHMNIEARLRELIGPTAGRLHTARSRNDQVAVDFRLWVREACDRSAAQLEALQKALVAQAEQYADALMPGFTHLQPAQPVTFGHHLMAYVEMFGRDASRFRDARVRMNECPLGAAALAGSPFPIDRHATAASLGFDRPTANSLDSVSARDFALEALSAASICATHLSRLAEEIVLWTTPMFGFVKLTDAFTTGSSIMPQKKNPDAAELVRAKVGRILGSLTTLTVVMKGLPLAYSKDMQEDKVPTFEAFDALELSLLAMAGMVSDLTPNTEKMAAAAGAGFSTATDLADWLVRELNMPFRDAHHVTGSAVKAAETLGVDLAELSLADLRAIEPRITSDIYTVLTPAASAASRISYGGTAPAQVRAQIARWKELLG.

It belongs to the lyase 1 family. Argininosuccinate lyase subfamily.

It is found in the cytoplasm. It catalyses the reaction 2-(N(omega)-L-arginino)succinate = fumarate + L-arginine. The protein operates within amino-acid biosynthesis; L-arginine biosynthesis; L-arginine from L-ornithine and carbamoyl phosphate: step 3/3. The protein is Argininosuccinate lyase of Caulobacter sp. (strain K31).